A 405-amino-acid chain; its full sequence is Imidazolonepropionase (405 aa).

Positions 70 and 72 each coordinate Fe(3+). Residues His-70 and His-72 each coordinate Zn(2+). 3 residues coordinate 4-imidazolone-5-propanoate: Arg-79, Tyr-142, and His-175. Tyr-142 is an N-formimidoyl-L-glutamate binding site. His-240 is a Fe(3+) binding site. Residue His-240 participates in Zn(2+) binding. 4-imidazolone-5-propanoate is bound at residue Gln-243. A Fe(3+)-binding site is contributed by Asp-315. Asp-315 is a binding site for Zn(2+). 2 residues coordinate N-formimidoyl-L-glutamate: Asn-317 and Gly-319. Ser-320 provides a ligand contact to 4-imidazolone-5-propanoate.

The protein belongs to the metallo-dependent hydrolases superfamily. HutI family. Zn(2+) is required as a cofactor. The cofactor is Fe(3+).

It is found in the cytoplasm. It catalyses the reaction 4-imidazolone-5-propanoate + H2O = N-formimidoyl-L-glutamate. The protein operates within amino-acid degradation; L-histidine degradation into L-glutamate; N-formimidoyl-L-glutamate from L-histidine: step 3/3. Functionally, catalyzes the hydrolytic cleavage of the carbon-nitrogen bond in imidazolone-5-propanoate to yield N-formimidoyl-L-glutamate. It is the third step in the universal histidine degradation pathway. The polypeptide is Imidazolonepropionase (Ruegeria sp. (strain TM1040) (Silicibacter sp.)).